The primary structure comprises 311 residues: Pantothenate kinase (311 aa).

93–100 lines the ATP pocket; that stretch reads GSVAVGKS.

The protein belongs to the prokaryotic pantothenate kinase family.

It is found in the cytoplasm. It catalyses the reaction (R)-pantothenate + ATP = (R)-4'-phosphopantothenate + ADP + H(+). It functions in the pathway cofactor biosynthesis; coenzyme A biosynthesis; CoA from (R)-pantothenate: step 1/5. This chain is Pantothenate kinase (coaA), found in Haemophilus influenzae (strain ATCC 51907 / DSM 11121 / KW20 / Rd).